Reading from the N-terminus, the 234-residue chain is 1-(5-phosphoribosyl)-5-[(5-phosphoribosylamino)methylideneamino] imidazole-4-carboxamide isomerase (234 aa).

The active-site Proton acceptor is the aspartate 9. Aspartate 131 (proton donor) is an active-site residue.

The protein belongs to the HisA/HisF family.

The protein localises to the cytoplasm. The catalysed reaction is 1-(5-phospho-beta-D-ribosyl)-5-[(5-phospho-beta-D-ribosylamino)methylideneamino]imidazole-4-carboxamide = 5-[(5-phospho-1-deoxy-D-ribulos-1-ylimino)methylamino]-1-(5-phospho-beta-D-ribosyl)imidazole-4-carboxamide. The protein operates within amino-acid biosynthesis; L-histidine biosynthesis; L-histidine from 5-phospho-alpha-D-ribose 1-diphosphate: step 4/9. This is 1-(5-phosphoribosyl)-5-[(5-phosphoribosylamino)methylideneamino] imidazole-4-carboxamide isomerase from Staphylococcus epidermidis (strain ATCC 35984 / DSM 28319 / BCRC 17069 / CCUG 31568 / BM 3577 / RP62A).